Consider the following 687-residue polypeptide: RNA-binding protein VTS1 (687 aa).

Residues 1–10 (MASHTLRPHR) show a composition bias toward basic residues. Disordered stretches follow at residues 1–115 (MASH…TPEA), 248–341 (AAAK…PGIG), and 526–598 (SPFN…AGVA). Positions 29–41 (TRQSLGPPTSGNS) are enriched in polar residues. Residues 52-68 (GLASPSSPSQPRHVSSS) show a composition bias toward low complexity. The span at 287–301 (GLESNMSGRSRSKSP) shows a compositional bias: polar residues. Positions 305–324 (PRPKSTDFSGKPRESLRRES) are enriched in basic and acidic residues. Polar residues predominate over residues 526-539 (SPFNASAPSLQPGL). The span at 550 to 566 (QSSHLNQHYNQHQQQHQ) shows a compositional bias: low complexity. Positions 585–597 (QTGGGGAGGGAGV) are enriched in gly residues. The region spanning 606–667 (KVLEDVPNWL…LKVFYNVRTK (62 aa)) is the SAM domain.

This sequence belongs to the VTS1 family. In terms of assembly, monomer. Binds to RNA.

It is found in the cytoplasm. It localises to the cytosol. The protein resides in the P-body. Its function is as follows. RNA-binding protein involved in post-transcriptional regulation through transcript degradation. The chain is RNA-binding protein VTS1 from Cryptococcus neoformans var. grubii serotype A (strain H99 / ATCC 208821 / CBS 10515 / FGSC 9487) (Filobasidiella neoformans var. grubii).